We begin with the raw amino-acid sequence, 218 residues long: 3-phospho-D-glycerate guanylyltransferase (218 aa).

This sequence belongs to the CofC family.

It carries out the reaction (2R)-3-phosphoglycerate + GTP + H(+) = 3-[(R)-glyceryl]-diphospho-5'-guanosine + diphosphate. The protein operates within cofactor biosynthesis; coenzyme F420 biosynthesis. Guanylyltransferase that catalyzes the activation of (2R)-3-phosphoglycerate (3PG) as 3-[(R)-glyceryl]-diphospho-5'-guanosine, via the condensation of 3PG with GTP. It is involved in the biosynthesis of a derivative of the hydride carrier cofactor coenzyme F420, 3PG-F420. The chain is 3-phospho-D-glycerate guanylyltransferase from Phenylobacterium zucineum (strain HLK1).